The chain runs to 855 residues: Beta-mannosidase B (855 aa).

An N-linked (GlcNAc...) asparagine glycan is attached at Asn-98. The Proton donor role is filled by Glu-430. 2 N-linked (GlcNAc...) asparagine glycosylation sites follow: Asn-693 and Asn-730.

This sequence belongs to the glycosyl hydrolase 2 family. Beta-mannosidase B subfamily. As to quaternary structure, homodimer.

It localises to the secreted. The catalysed reaction is Hydrolysis of terminal, non-reducing beta-D-mannose residues in beta-D-mannosides.. The protein operates within glycan metabolism; N-glycan degradation. Its function is as follows. Exoglycosidase that cleaves the single beta-linked mannose residue from the non-reducing end of beta-mannosidic oligosaccharides of various complexity and length. Prefers mannobiose over mannotriose. Is also severely restricted by galactosyl substitutions at the +1 subsite. Has no activity against polymeric mannan. In Thermothelomyces thermophilus (Myceliophthora thermophila), this protein is Beta-mannosidase B (man9).